Here is a 108-residue protein sequence, read N- to C-terminus: UPF0102 protein SO_0299 (108 aa).

It belongs to the UPF0102 family.

This chain is UPF0102 protein SO_0299, found in Shewanella oneidensis (strain ATCC 700550 / JCM 31522 / CIP 106686 / LMG 19005 / NCIMB 14063 / MR-1).